The following is a 259-amino-acid chain: Expansin-B4 (259 aa).

Positions 1–23 (MASSQRYFALLALFAVSLKFCYC) are cleaved as a signal peptide. An N-linked (GlcNAc...) asparagine glycan is attached at Asn-25. Residues 51-161 (GGACGYGSAV…KRAACLYRGT (111 aa)) form the Expansin-like EG45 domain. Cystine bridges form between Cys-54–Cys-83, Cys-86–Cys-156, and Cys-91–Cys-97. The region spanning 174–255 (YYISFVVEYE…NWKPDESYRS (82 aa)) is the Expansin-like CBD domain.

Belongs to the expansin family. Expansin B subfamily.

It localises to the secreted. The protein resides in the cell wall. Its subcellular location is the membrane. May cause loosening and extension of plant cell walls by disrupting non-covalent bonding between cellulose microfibrils and matrix glucans. No enzymatic activity has been found. In Arabidopsis thaliana (Mouse-ear cress), this protein is Expansin-B4 (EXPB4).